A 796-amino-acid polypeptide reads, in one-letter code: Conidiophore development regulator abaA (796 aa).

The TEA DNA-binding region spans 133-207 (GKDGEPVWSD…QVLDSFLKGD (75 aa)). The disordered stretch occupies residues 215–254 (REQSDRSTAQTQPVGPRWRTSMDHLPSSHYGTHATSSYPE). Positions 243–252 (HYGTHATSSY) are enriched in polar residues. Residues 341–362 (LSDVNDPLNCEIILLETNLELM) are leucine-zipper-like. A disordered region spans residues 612–643 (EGLSDKTAPTSVLDPFPNLTQQTTSQTAGINV). Over residues 629–643 (NLTQQTTSQTAGINV) the composition is skewed to polar residues.

It belongs to the TEC1 family.

Its subcellular location is the nucleus. Functionally, brlA, abaA and wetA are pivotal regulators of conidiophore development and conidium maturation. They act individually and together to regulate their own expression and that of numerous other sporulation-specific gene. Controls temporal and spatial specificity in Aspergillus development. Directs the differentiation of phialides and is continuously required for maintenance of their function. Expression of abaA leads to activation of brlA and wetA, cessation of vegetative growth, and accentuated cellular vacuolization. Binds to the sequence 5'-CATTCY-3', where Y is a pyrimidine, making both major- and minor-groove contacts. Multiple abaA binding sites are present in the cis-acting regulatory regions of several developmentally controlled structural genes as well as those of the upstream regulatory gene brlA, the downstream regulatory gene wetA, and abaA itself. This chain is Conidiophore development regulator abaA, found in Emericella nidulans (strain FGSC A4 / ATCC 38163 / CBS 112.46 / NRRL 194 / M139) (Aspergillus nidulans).